The following is a 344-amino-acid chain: Methionine import ATP-binding protein MetN (344 aa).

The 240-residue stretch at 2–241 (IELQGLSQRF…PQHEVTRAMI (240 aa)) folds into the ABC transporter domain. Position 38 to 45 (38 to 45 (GRSGAGKS)) interacts with ATP.

This sequence belongs to the ABC transporter superfamily. Methionine importer (TC 3.A.1.24) family. The complex is composed of two ATP-binding proteins (MetN), two transmembrane proteins (MetI) and a solute-binding protein (MetQ).

It is found in the cell inner membrane. It carries out the reaction L-methionine(out) + ATP + H2O = L-methionine(in) + ADP + phosphate + H(+). It catalyses the reaction D-methionine(out) + ATP + H2O = D-methionine(in) + ADP + phosphate + H(+). Functionally, part of the ABC transporter complex MetNIQ involved in methionine import. Responsible for energy coupling to the transport system. This is Methionine import ATP-binding protein MetN from Cupriavidus pinatubonensis (strain JMP 134 / LMG 1197) (Cupriavidus necator (strain JMP 134)).